The sequence spans 346 residues: 3 beta-hydroxysteroid dehydrogenase/Delta 5--&gt;4-isomerase (346 aa).

Y147 (proton acceptor) is an active-site residue. K151 lines the NAD(+) pocket.

The protein belongs to the 3-beta-HSD family.

The catalysed reaction is a 3beta-hydroxy-Delta(5)-steroid + NAD(+) = a 3-oxo-Delta(5)-steroid + NADH + H(+). It carries out the reaction a 3-oxo-Delta(5)-steroid = a 3-oxo-Delta(4)-steroid. Its pathway is lipid metabolism; steroid biosynthesis. Its function is as follows. Catalyzes the oxidative conversion of Delta(5)-ene-3-beta-hydroxy steroid, and the oxidative conversion of ketosteroids. The 3-beta-HSD enzymatic system plays a crucial role in the biosynthesis of all classes of hormonal steroids. During viral infection, steroid production contributes to virulence by inhibiting the host inflammatory response. This Homo sapiens (Human) protein is 3 beta-hydroxysteroid dehydrogenase/Delta 5--&gt;4-isomerase (OPG174).